Reading from the N-terminus, the 116-residue chain is Movement protein TGB2 (116 aa).

Residues 1 to 11 are Cytoplasmic-facing; sequence MPLTPPPNPQK. The helical transmembrane segment at 12 to 32 threads the bilayer; sequence TYQIAILALGLVLLAFVLISD. Residues 33–77 lie on the Lumenal side of the membrane; it reads HSPKVGDHLHNLPFGGEYKDGTKSIKYFQRPNQHSLSKTLAKSHN. Residues 78–98 traverse the membrane as a helical segment; that stretch reads TTIFLLILGLIVTLHGLHYFN. The Cytoplasmic portion of the chain corresponds to 99 to 116; that stretch reads NNRRVSSSLHCVLCQNKH.

Belongs to the Tymovirales TGBp2 protein family.

The protein resides in the host endoplasmic reticulum membrane. Functionally, plays a role in viral cell-to-cell propagation, by facilitating genome transport to neighboring plant cells through plasmosdesmata,. In White clover mosaic virus (strain M) (WCMV), this protein is Movement protein TGB2.